The following is a 73-amino-acid chain: Putative sulfur carrier protein AF_0556 (73 aa).

Cys-11 (cysteine persulfide intermediate) is an active-site residue.

It belongs to the sulfur carrier protein TusA family.

The protein is Putative sulfur carrier protein AF_0556 of Archaeoglobus fulgidus (strain ATCC 49558 / DSM 4304 / JCM 9628 / NBRC 100126 / VC-16).